We begin with the raw amino-acid sequence, 87 residues long: U15-lycotoxin-Ls1f (87 aa).

A signal peptide spans 1 to 20; the sequence is MNSKIFAVLLLLGLLSCVLS. Residues 21–66 form the WAP domain; sequence DQYCPKSSITACKKMNIRNDCCKDDDCTGGSWCCATPCGNFCKYPT. Disulfide bonds link Cys-24-Cys-54, Cys-32-Cys-58, Cys-41-Cys-53, Cys-42-Cys-80, and Cys-47-Cys-62.

This sequence belongs to the venom protein 11 family. 01 (wap-1) subfamily. In terms of processing, contains 5 disulfide bonds. Expressed by the venom gland.

It localises to the secreted. In terms of biological role, has antibacterial activity. The sequence is that of U15-lycotoxin-Ls1f from Lycosa singoriensis (Wolf spider).